We begin with the raw amino-acid sequence, 830 residues long: Scavenger receptor class F member 1 (830 aa).

The first 19 residues, methionine 1–glycine 19, serve as a signal peptide directing secretion. Residues serine 20–threonine 421 are Extracellular-facing. EGF-like domains are found at residues threonine 53–serine 87, tryptophan 95–glutamate 130, tryptophan 155–serine 191, and tryptophan 215–glutamate 249. 12 disulfides stabilise this stretch: cysteine 57/cysteine 69, cysteine 63/cysteine 75, cysteine 77/cysteine 86, cysteine 99/cysteine 111, cysteine 105/cysteine 118, cysteine 120/cysteine 129, cysteine 159/cysteine 172, cysteine 165/cysteine 179, cysteine 181/cysteine 190, cysteine 219/cysteine 230, cysteine 225/cysteine 237, and cysteine 239/cysteine 248. An N-linked (GlcNAc...) asparagine glycan is attached at asparagine 289. EGF-like domains lie at phenylalanine 302–glutamate 339 and cysteine 351–asparagine 382. Cystine bridges form between cysteine 306-cysteine 319, cysteine 313-cysteine 326, cysteine 329-cysteine 338, cysteine 355-cysteine 363, cysteine 358-cysteine 370, and cysteine 372-cysteine 381. N-linked (GlcNAc...) asparagine glycans are attached at residues asparagine 382 and asparagine 393. A helical membrane pass occupies residues alanine 422 to alanine 442. Residues cysteine 443 to proline 830 lie on the Cytoplasmic side of the membrane. 3 disordered regions span residues glycine 516–cysteine 539, serine 581–valine 688, and phenylalanine 715–proline 830. Residues serine 589 and serine 606 each carry the phosphoserine modification. A compositionally biased stretch (acidic residues) spans glutamate 634–alanine 643. Residues proline 644–proline 653 are compositionally biased toward low complexity.

Heterophilic interaction with SREC2 via its extracellular domain. The heterophilic interaction is suppressed by the presence of ligand such as Ac-LDL. Interacts with AVIL. In terms of tissue distribution, endothelial cells.

It is found in the membrane. Functionally, mediates the binding and degradation of acetylated low density lipoprotein (Ac-LDL). Mediates heterophilic interactions, suggesting a function as adhesion protein. Plays a role in the regulation of neurite-like outgrowth. This chain is Scavenger receptor class F member 1 (SCARF1), found in Homo sapiens (Human).